Here is a 794-residue protein sequence, read N- to C-terminus: Lon protease (794 aa).

In terms of domain architecture, Lon N-terminal spans 13–204 (VPLYPLREII…KVYMHLTNEV (192 aa)). An ATP-binding site is contributed by 356–363 (GPPGVGKT). One can recognise a Lon proteolytic domain in the interval 592-773 (KDRVGVATGL…REVFVQALNP (182 aa)). Residues Ser679 and Lys722 contribute to the active site. Residues 774-788 (TSPAPTAATSARTPA) show a composition bias toward low complexity. The tract at residues 774 to 794 (TSPAPTAATSARTPAGAPPPQ) is disordered.

The protein belongs to the peptidase S16 family. In terms of assembly, homohexamer. Organized in a ring with a central cavity.

It is found in the cytoplasm. The catalysed reaction is Hydrolysis of proteins in presence of ATP.. Functionally, ATP-dependent serine protease that mediates the selective degradation of mutant and abnormal proteins as well as certain short-lived regulatory proteins. Required for cellular homeostasis and for survival from DNA damage and developmental changes induced by stress. Degrades polypeptides processively to yield small peptide fragments that are 5 to 10 amino acids long. Binds to DNA in a double-stranded, site-specific manner. In Citrifermentans bemidjiense (strain ATCC BAA-1014 / DSM 16622 / JCM 12645 / Bem) (Geobacter bemidjiensis), this protein is Lon protease.